The sequence spans 446 residues: Hercynine oxygenase (446 aa).

His51 provides a ligand contact to Fe cation. 87–90 (RASR) serves as a coordination point for gamma-L-glutamyl-L-cysteine. Fe cation is bound by residues His134 and His138. Asp416 and Arg420 together coordinate gamma-L-glutamyl-L-cysteine.

The protein belongs to the EgtB family. As to quaternary structure, monomer. Fe(2+) is required as a cofactor.

It catalyses the reaction gamma-L-glutamyl-L-cysteine + hercynine + O2 = gamma-L-glutamyl-hercynylcysteine S-oxide + H2O. It participates in amino-acid biosynthesis; ergothioneine biosynthesis. Its function is as follows. Catalyzes the oxidative sulfurization of hercynine (N-alpha,N-alpha,N-alpha-trimethyl-L-histidine) into hercynyl-gamma-L-glutamyl-L-cysteine sulfoxide, a step in the biosynthesis pathway of ergothioneine. The protein is Hercynine oxygenase of Mycolicibacterium thermoresistibile (strain ATCC 19527 / DSM 44167 / CIP 105390 / JCM 6362 / NCTC 10409 / 316) (Mycobacterium thermoresistibile).